We begin with the raw amino-acid sequence, 552 residues long: ATP synthase subunit alpha (552 aa).

Residue 173–180 (GDRQTGKS) participates in ATP binding. Residues 509–552 (KPQFSGGSKGSNVPKDVDAGATDADDISQEKITTRKGGATAARG) are disordered.

It belongs to the ATPase alpha/beta chains family. As to quaternary structure, F-type ATPases have 2 components, CF(1) - the catalytic core - and CF(0) - the membrane proton channel. CF(1) has five subunits: alpha(3), beta(3), gamma(1), delta(1), epsilon(1). CF(0) has three main subunits: a(1), b(2) and c(9-12). The alpha and beta chains form an alternating ring which encloses part of the gamma chain. CF(1) is attached to CF(0) by a central stalk formed by the gamma and epsilon chains, while a peripheral stalk is formed by the delta and b chains.

The protein resides in the cell membrane. The catalysed reaction is ATP + H2O + 4 H(+)(in) = ADP + phosphate + 5 H(+)(out). Its function is as follows. Produces ATP from ADP in the presence of a proton gradient across the membrane. The alpha chain is a regulatory subunit. In Kineococcus radiotolerans (strain ATCC BAA-149 / DSM 14245 / SRS30216), this protein is ATP synthase subunit alpha.